The following is a 563-amino-acid chain: Arginine--tRNA ligase (563 aa).

The 'HIGH' region motif lies at 122–132 (PNIAKPISMGH).

Belongs to the class-I aminoacyl-tRNA synthetase family. In terms of assembly, monomer.

The protein resides in the cytoplasm. The enzyme catalyses tRNA(Arg) + L-arginine + ATP = L-arginyl-tRNA(Arg) + AMP + diphosphate. In Latilactobacillus sakei subsp. sakei (strain 23K) (Lactobacillus sakei subsp. sakei), this protein is Arginine--tRNA ligase.